The chain runs to 140 residues: MGRLVFVSFGLLVVFLSLSGTGADCPSDWSSYEGHCYRVFQQEMTWEAAEKFCTQQHQKSHPVYFRSSEEVDFLVSILKFDLFWMGWRDIWNERRLQWSDGTKVNYKAWSAEPECVVCRATDNQWFSTSCSKTHNVICKF.

The signal sequence occupies residues 1-23; it reads MGRLVFVSFGLLVVFLSLSGTGA. Intrachain disulfides connect Cys-25-Cys-36, Cys-53-Cys-138, and Cys-115-Cys-130. In terms of domain architecture, C-type lectin spans 32–139; the sequence is YEGHCYRVFQ…CSKTHNVICK (108 aa).

The protein belongs to the snaclec family. As to quaternary structure, heteromultimer; disulfide-linked. Expressed by the venom gland.

It is found in the secreted. Functionally, interferes with one step of hemostasis (modulation of platelet aggregation, or coagulation cascade, for example). This is C-type lectin 6 from Crotalus adamanteus (Eastern diamondback rattlesnake).